Consider the following 268-residue polypeptide: Nickel import ATP-binding protein NikE (268 aa).

An ABC transporter domain is found at 4–252 (LNVSDLSHHY…SSDAGRVLQN (249 aa)). Residue 45–52 (GRSGCGKS) participates in ATP binding.

This sequence belongs to the ABC transporter superfamily. Nickel importer (TC 3.A.1.5.3) family. In terms of assembly, the complex is composed of two ATP-binding proteins (NikD and NikE), two transmembrane proteins (NikB and NikC) and a solute-binding protein (NikA).

Its subcellular location is the cell inner membrane. It carries out the reaction Ni(2+)(out) + ATP + H2O = Ni(2+)(in) + ADP + phosphate + H(+). Functionally, part of the ABC transporter complex NikABCDE involved in nickel import. Responsible for energy coupling to the transport system. The sequence is that of Nickel import ATP-binding protein NikE from Escherichia coli O6:K15:H31 (strain 536 / UPEC).